The chain runs to 1446 residues: Sister chromatid cohesion protein PDS5 homolog B (1446 aa).

One copy of the HEAT repeat lies at 383 to 419 (LLVNDHLLNFVRERTLDKRWRVRKEAMMGLAQIYKKY). K1136 bears the N6-acetyllysine mark. The segment covering 1137 to 1155 (PLSSAGKQSQTKSSRMETV) has biased composition (polar residues). Positions 1137-1446 (PLSSAGKQSQ…RRRSSKRERR (310 aa)) are disordered. A phosphoserine mark is found at S1140, S1162, S1166, S1176, S1182, and S1191. A compositionally biased stretch (low complexity) spans 1156–1167 (SNASSSSNPSSP). The span at 1172–1184 (GRLDSSEMDHSEN) shows a compositional bias: basic and acidic residues. Composition is skewed to basic and acidic residues over residues 1196 to 1212 (KKSD…LEKP) and 1223 to 1241 (PEEK…EQKP). Over residues 1243-1252 (GSQRGRKRGR) the composition is skewed to basic residues. Residues 1247-1259 (GRKRGRTASDSDE) constitute a DNA-binding region (a.T hook 1). Residue T1253 is modified to Phosphothreonine. S1255 and S1257 each carry phosphoserine. Residues 1263–1272 (PEEKRHKEEL) are compositionally biased toward basic and acidic residues. S1281 is modified (phosphoserine). The segment at residues 1285 to 1297 (KGKRGRPPKPLGG) is a DNA-binding region (a.T hook 2). 2 stretches are compositionally biased toward basic residues: residues 1308–1317 (TSKKGNKKKL) and 1339–1351 (SKSK…KRAQ). Over residues 1353-1370 (RAESPETSAVESTQSTPQ) the composition is skewed to polar residues. Phosphoserine is present on residues S1356 and S1364. The residue at position 1365 (T1365) is a Phosphothreonine. S1367 carries the phosphoserine modification. T1368 is subject to Phosphothreonine. Residues 1370-1382 (QKGRGRPSKAPSP) constitute a DNA-binding region (a.T hook 3). S1381, S1415, and S1418 each carry phosphoserine. A compositionally biased stretch (acidic residues) spans 1421–1431 (TTQEGAEEEDI). Residues 1436 to 1446 (VRRRSSKRERR) show a composition bias toward basic residues.

This sequence belongs to the PDS5 family. Interacts with the cohesin complex. Interacts with RAD21; the interaction is direct. Interacts with WAPL (via FGF motifs) or CDCA5 (via the FGF motif); the interaction is direct, cohesin-dependent and competitive. In terms of tissue distribution, expressed in prostate.

The protein resides in the nucleus. Its function is as follows. Regulator of sister chromatid cohesion in mitosis which may stabilize cohesin complex association with chromatin. May couple sister chromatid cohesion during mitosis to DNA replication. Cohesion ensures that chromosome partitioning is accurate in both meiotic and mitotic cells and plays an important role in DNA repair. Plays a role in androgen-induced proliferative arrest in prostate cells. The protein is Sister chromatid cohesion protein PDS5 homolog B (Pds5b) of Mus musculus (Mouse).